The sequence spans 287 residues: Toxin zeta (287 aa).

An ATP-binding site is contributed by 40–47 (GQPGSGKT). Residue N66 participates in substrate binding. D67 functions as the Proton acceptor in the catalytic mechanism. Positions 100, 118, 120, and 128 each coordinate substrate. The segment at 267–287 (KLESLQPPTPPIPKTPKLPGI) is disordered. The span at 273–287 (PPTPPIPKTPKLPGI) shows a compositional bias: pro residues.

It belongs to the zeta toxin family. As to quaternary structure, in the presence of the epsilon antitoxin forms an inactive PezA(2)PezT(2) heterotetramer. The heterotetramer is still able to bind the UNAG substrate.

The catalysed reaction is UDP-N-acetyl-alpha-D-glucosamine + ATP = UDP-N-acetyl-alpha-D-glucosamine 3'-phosphate + ADP + H(+). Toxic component of a type II toxin-antitoxin (TA) system. Phosphorylates UDP-N-acetyl-D-glucosamine (UNAG) on the 3'-hydroxyl group of the N-acetyl-D-glucosamine moiety, yielding UNAG-3P. UNAG-3P inhibits MurA, the first committed step in cell wall synthesis, which is then blocked. Phosphorylation is inhibited by cognate epsilon antitoxin. Part of a postsegregational killing (PSK) system involved in the killing of plasmid-free cells. The zeta toxin induces programmed cell death. In Streptococcus pyogenes, this protein is Toxin zeta.